The following is a 431-amino-acid chain: Arginine biosynthesis bifunctional protein ArgJ, mitochondrial (431 aa).

Residues T174, K200, T211, E297, N426, and T431 each contribute to the substrate site. Catalysis depends on T211, which acts as the Nucleophile.

It belongs to the ArgJ family. Heterodimer of an alpha and a beta chain. Post-translationally, the alpha and beta chains are autoproteolytically processed from a single precursor protein within the mitochondrion.

It is found in the mitochondrion matrix. It carries out the reaction N(2)-acetyl-L-ornithine + L-glutamate = N-acetyl-L-glutamate + L-ornithine. It catalyses the reaction L-glutamate + acetyl-CoA = N-acetyl-L-glutamate + CoA + H(+). Its pathway is amino-acid biosynthesis; L-arginine biosynthesis; L-ornithine and N-acetyl-L-glutamate from L-glutamate and N(2)-acetyl-L-ornithine (cyclic): step 1/1. It participates in amino-acid biosynthesis; L-arginine biosynthesis; N(2)-acetyl-L-ornithine from L-glutamate: step 1/4. Catalyzes two activities which are involved in the cyclic version of arginine biosynthesis: the synthesis of acetylglutamate from glutamate and acetyl-CoA, and of ornithine by transacetylation between acetylornithine and glutamate. The polypeptide is Arginine biosynthesis bifunctional protein ArgJ, mitochondrial (Yarrowia lipolytica (strain CLIB 122 / E 150) (Yeast)).